Reading from the N-terminus, the 325-residue chain is Diaminopimelate epimerase (325 aa).

Substrate-binding residues include Asn-11 and Asn-69. Residue Cys-78 is the Proton donor of the active site. Residues 79–80, Asn-166, Asn-203, and 221–222 contribute to the substrate site; these read GN and ER. The active-site Proton acceptor is Cys-230. Residue 231–232 participates in substrate binding; that stretch reads GT.

It belongs to the diaminopimelate epimerase family. As to quaternary structure, homodimer.

The protein localises to the cytoplasm. The enzyme catalyses (2S,6S)-2,6-diaminopimelate = meso-2,6-diaminopimelate. It participates in amino-acid biosynthesis; L-lysine biosynthesis via DAP pathway; DL-2,6-diaminopimelate from LL-2,6-diaminopimelate: step 1/1. Its function is as follows. Catalyzes the stereoinversion of LL-2,6-diaminopimelate (L,L-DAP) to meso-diaminopimelate (meso-DAP), a precursor of L-lysine and an essential component of the bacterial peptidoglycan. This chain is Diaminopimelate epimerase, found in Ligilactobacillus salivarius (strain UCC118) (Lactobacillus salivarius).